A 751-amino-acid polypeptide reads, in one-letter code: Transposable element P transposase (751 aa).

The THAP-type zinc-finger motif lies at 1–77 (MKYCKFCCKA…LNADAVPSKV (77 aa)).

Functionally, P-element transposase that specifically mediates transposition of P-elements. Mediates both; precise and imprecise excision. In Drosophila melanogaster (Fruit fly), this protein is Transposable element P transposase.